Reading from the N-terminus, the 86-residue chain is MSSLDNTMKFTVPKEANTADVQETLTEVYKALQEKGYNPITQIVGYLLSGDPAFIPRHNNARSLIGKLERDKIIEELVTVYLSERK.

Belongs to the UPF0297 family.

This Brevibacillus brevis (strain 47 / JCM 6285 / NBRC 100599) protein is UPF0297 protein BBR47_19030.